Here is a 44-residue protein sequence, read N- to C-terminus: pyr operon leader peptide (44 aa).

The sequence is that of pyr operon leader peptide (pyrL) from Escherichia coli O157:H7.